A 163-amino-acid chain; its full sequence is MRLTSKGRYAVTAMLDVALNSETGPVPLADISERQGISLSYLEQLFSRLRKNGLVSSVRGPGGGYLLGKDASSIAVGEVISAVDESVDATRCQGKGGCQGGDKCLTHALWRDLSERLTGFLNNITLGELVNNQEILDVSGRQHQHETQRNARTQDAIDVKLRA.

One can recognise an HTH rrf2-type domain in the interval 2–131 (RLTSKGRYAV…NNITLGELVN (130 aa)). Residues 28 to 51 (LADISERQGISLSYLEQLFSRLRK) constitute a DNA-binding region (H-T-H motif). [2Fe-2S] cluster is bound by residues cysteine 92, cysteine 98, and cysteine 104.

[2Fe-2S] cluster serves as cofactor.

Its function is as follows. Regulates the transcription of several operons and genes involved in the biogenesis of Fe-S clusters and Fe-S-containing proteins. The chain is HTH-type transcriptional regulator IscR from Klebsiella pneumoniae (strain 342).